Reading from the N-terminus, the 423-residue chain is Putative competence-damage inducible protein (423 aa).

It belongs to the CinA family.

This Streptococcus pyogenes serotype M18 (strain MGAS8232) protein is Putative competence-damage inducible protein.